A 117-amino-acid chain; its full sequence is Bomanin Bicipital 1 (117 aa).

Positions 1–20 (MKCLILSFAIFVVLASQATA) are cleaved as a signal peptide. Intrachain disulfides connect Cys29/Cys32 and Cys107/Cys110.

The protein belongs to the bomanin family. Hemolymph (at protein level).

The protein localises to the secreted. Secreted immune-induced peptide induced by Toll signaling. Has a role in resistance to bacterial and fungal infections. The polypeptide is Bomanin Bicipital 1 (Drosophila melanogaster (Fruit fly)).